Here is a 255-residue protein sequence, read N- to C-terminus: Pyrroloquinoline-quinone synthase (255 aa).

It belongs to the PqqC family.

It catalyses the reaction 6-(2-amino-2-carboxyethyl)-7,8-dioxo-1,2,3,4,7,8-hexahydroquinoline-2,4-dicarboxylate + 3 O2 = pyrroloquinoline quinone + 2 H2O2 + 2 H2O + H(+). It functions in the pathway cofactor biosynthesis; pyrroloquinoline quinone biosynthesis. In terms of biological role, ring cyclization and eight-electron oxidation of 3a-(2-amino-2-carboxyethyl)-4,5-dioxo-4,5,6,7,8,9-hexahydroquinoline-7,9-dicarboxylic-acid to PQQ. This chain is Pyrroloquinoline-quinone synthase, found in Cereibacter sphaeroides (strain ATCC 17023 / DSM 158 / JCM 6121 / CCUG 31486 / LMG 2827 / NBRC 12203 / NCIMB 8253 / ATH 2.4.1.) (Rhodobacter sphaeroides).